Reading from the N-terminus, the 38-residue chain is Very early lactation protein (38 aa).

In terms of assembly, homodimer. O-glycosylated. Contains sialic acid residues. In terms of tissue distribution, found in the whey fraction of milk (at protein level).

It is found in the secreted. The protein is Very early lactation protein of Trichosurus vulpecula (Brush-tailed possum).